The following is a 70-amino-acid chain: Translation initiation factor IF-1 (70 aa).

The 70-residue stretch at 1–70 folds into the S1-like domain; sequence MKETNLSIKG…LTKGRIIYRH (70 aa).

It belongs to the IF-1 family. Component of the 30S ribosomal translation pre-initiation complex which assembles on the 30S ribosome in the order IF-2 and IF-3, IF-1 and N-formylmethionyl-tRNA(fMet); mRNA recruitment can occur at any time during PIC assembly.

Its subcellular location is the cytoplasm. One of the essential components for the initiation of protein synthesis. Stabilizes the binding of IF-2 and IF-3 on the 30S subunit to which N-formylmethionyl-tRNA(fMet) subsequently binds. Helps modulate mRNA selection, yielding the 30S pre-initiation complex (PIC). Upon addition of the 50S ribosomal subunit IF-1, IF-2 and IF-3 are released leaving the mature 70S translation initiation complex. This is Translation initiation factor IF-1 from Mycoplasmoides gallisepticum (strain R(low / passage 15 / clone 2)) (Mycoplasma gallisepticum).